The primary structure comprises 305 residues: tRNA dimethylallyltransferase (305 aa).

ATP is bound at residue 11 to 18 (GPTAVGKT). Position 13–18 (13–18 (TAVGKT)) interacts with substrate. An interaction with substrate tRNA region spans residues 36–39 (DSMQ).

The protein belongs to the IPP transferase family. As to quaternary structure, monomer. Mg(2+) serves as cofactor.

It carries out the reaction adenosine(37) in tRNA + dimethylallyl diphosphate = N(6)-dimethylallyladenosine(37) in tRNA + diphosphate. Its function is as follows. Catalyzes the transfer of a dimethylallyl group onto the adenine at position 37 in tRNAs that read codons beginning with uridine, leading to the formation of N6-(dimethylallyl)adenosine (i(6)A). In Listeria monocytogenes serotype 4b (strain CLIP80459), this protein is tRNA dimethylallyltransferase.